The following is a 286-amino-acid chain: Transcriptional regulator of yeast form adherence 4 (286 aa).

Low complexity-rich tracts occupy residues 1-29 and 37-65; these read MSLPMSPVSPINTTTSTSTTTTPLSPPSS and LSTSISNNSITSDSSLDSNTSTSSTTTTN. Residues 1–71 form a disordered region; that stretch reads MSLPMSPVSP…TTTNYGTKTP (71 aa). C2H2-type zinc fingers lie at residues 78 to 101 and 107 to 130; these read FNCTLCQRAFTREEHLTRHTLSTH and FTCGICSRPFSRRDLLLRHAKNLH. Residues 146-260 form a disordered region; it reads HCNKDNDSKS…ITNSSTSHIH (115 aa). Composition is skewed to low complexity over residues 156-165 and 228-244; these read GSDSNTNKTN and SVPSTTTTSTTTVPTST. The segment covering 245–260 has biased composition (polar residues); sequence NNDTASITNSSTSHIH.

The protein resides in the nucleus. Its function is as follows. Transcription factor required for yeast cell adherence to silicone substrate. This chain is Transcriptional regulator of yeast form adherence 4 (TRY4), found in Candida albicans (strain SC5314 / ATCC MYA-2876) (Yeast).